A 323-amino-acid polypeptide reads, in one-letter code: tRNA dimethylallyltransferase (323 aa).

12–19 (GPTAAGKT) is an ATP binding site. Residue 14-19 (TAAGKT) coordinates substrate. Interaction with substrate tRNA stretches follow at residues 37 to 40 (DSAL) and 161 to 165 (QRLIR).

Belongs to the IPP transferase family. In terms of assembly, monomer. It depends on Mg(2+) as a cofactor.

The enzyme catalyses adenosine(37) in tRNA + dimethylallyl diphosphate = N(6)-dimethylallyladenosine(37) in tRNA + diphosphate. Its function is as follows. Catalyzes the transfer of a dimethylallyl group onto the adenine at position 37 in tRNAs that read codons beginning with uridine, leading to the formation of N6-(dimethylallyl)adenosine (i(6)A). This Pseudomonas entomophila (strain L48) protein is tRNA dimethylallyltransferase.